Here is a 376-residue protein sequence, read N- to C-terminus: UDP-4-amino-4,6-dideoxy-N-acetyl-beta-L-altrosamine transaminase (376 aa).

Substrate contacts are provided by residues tyrosine 4, 24-27 (EILT), alanine 54, and serine 176. The residue at position 181 (lysine 181) is an N6-(pyridoxal phosphate)lysine. Residues asparagine 226 and 311-314 (QVHY) contribute to the substrate site.

Belongs to the DegT/DnrJ/EryC1 family.

It catalyses the reaction UDP-4-amino-4,6-dideoxy-N-acetyl-beta-L-altrosamine + 2-oxoglutarate = UDP-2-acetamido-2,6-dideoxy-beta-L-arabino-hex-4-ulose + L-glutamate. In terms of biological role, catalyzes the second step in the biosynthesis of pseudaminic acid, a sialic-acid-like sugar that is used to modify flagellin. Uses UDP-2-acetamido-2,6-dideoxy-beta-L-arabino-4-hexulose as substrate producing UDP-4-amino-4,6-dideoxy-beta-L-AltNAc. The sequence is that of UDP-4-amino-4,6-dideoxy-N-acetyl-beta-L-altrosamine transaminase (pseC) from Campylobacter jejuni subsp. jejuni serotype O:23/36 (strain 81-176).